The chain runs to 176 residues: Adenine phosphoribosyltransferase (176 aa).

This sequence belongs to the purine/pyrimidine phosphoribosyltransferase family. In terms of assembly, homodimer.

It is found in the cytoplasm. The catalysed reaction is AMP + diphosphate = 5-phospho-alpha-D-ribose 1-diphosphate + adenine. It participates in purine metabolism; AMP biosynthesis via salvage pathway; AMP from adenine: step 1/1. Functionally, catalyzes a salvage reaction resulting in the formation of AMP, that is energically less costly than de novo synthesis. The protein is Adenine phosphoribosyltransferase of Roseobacter denitrificans (strain ATCC 33942 / OCh 114) (Erythrobacter sp. (strain OCh 114)).